The sequence spans 5142 residues: Protein piccolo (5142 aa).

Residues 1 to 21 (MGNEASLEGEGLPEGLAAAAA) show a composition bias toward low complexity. Disordered regions lie at residues 1–154 (MGNE…SMMP) and 177–583 (DLIS…PSQG). Basic and acidic residues-rich tracts occupy residues 114-125 (RTTDTFRSEQKL), 136-150 (KESK…EHKS), and 188-202 (ETTK…EQGK). A compositionally biased stretch (polar residues) spans 232 to 244 (QDGTPKSISSQQP). Composition is skewed to pro residues over residues 298 to 317 (LPSP…PPAQ) and 352 to 371 (PVQP…PAKP). Residues 376–385 (TGSEKPSSEQ) show a composition bias toward polar residues. The 10 X 10 AA tandem approximate repeats of P-A-K-P-Q-P-Q-Q-P-X stretch occupies residues 397–555 (VGKTPAQQPG…PAKPSAQQST (159 aa)). Residues 467–493 (TKPPSQLPGPAKPPPQQPGPAKPPPQQ) show a composition bias toward pro residues. The segment covering 494 to 506 (PGSAKPPSQQPGS) has biased composition (low complexity). The segment covering 507 to 522 (TKPPPQQPGPAKPSPQ) has biased composition (pro residues). Residues 523-554 (QPGSTKPPSQQPGSAKPSAQQPSPAKPSAQQS) are compositionally biased toward low complexity. A C4-type zinc finger spans residues 589 to 613 (CPLCNTTELLLHVPEKANFNTCTEC). Disordered stretches follow at residues 650-929 (LAPV…TVTG) and 945-1058 (LIST…PEST). A compositionally biased stretch (low complexity) spans 673-683 (SKSSPQPQQTS). Composition is skewed to basic and acidic residues over residues 684–702 (PKKD…EPKK) and 743–755 (EQDK…DKPK). Positions 765 to 774 (DLVSSSSATT) are enriched in polar residues. Residues 841 to 857 (KGQKQVDPVQKKEEPKK) show a composition bias toward basic and acidic residues. Over residues 873-882 (KGSPTPPGPR) the composition is skewed to pro residues. The segment covering 889–927 (VPTPQQSPKPQEQSRRFSLNLGSITDAPKSQPTTPQETV) has biased composition (polar residues). A phosphoserine mark is found at Ser-906 and Ser-918. Thr-922 is subject to Phosphothreonine. The segment covering 949–969 (AGQPGPHSQSGPGAPMKQAPA) has biased composition (low complexity). 2 stretches are compositionally biased toward basic and acidic residues: residues 996-1012 (VKKE…EPKA) and 1019-1034 (KRTE…KDSK). A C4-type zinc finger spans residues 1059-1082 (CPLCKTELNIGSKDPPNFNTCTEC). Disordered regions lie at residues 1120 to 1163 (GDIR…QEQE), 1183 to 1386 (EKIP…TDEK), 1391 to 1410 (GLKK…SDLA), and 1423 to 1868 (QAST…SDPE). Pro residues predominate over residues 1126–1139 (PPAPSGPKASPMPV). 3 stretches are compositionally biased toward basic and acidic residues: residues 1193-1265 (QKQE…HDLL), 1307-1318 (PKEDDKTTKTIK), and 1330-1347 (DQVE…DKSD). Over residues 1348 to 1358 (TSSSQQPKSPQ) the composition is skewed to low complexity. A phosphoserine mark is found at Ser-1356, Ser-1366, Ser-1367, Ser-1396, Ser-1398, Ser-1401, Ser-1402, and Ser-1405. Positions 1359-1374 (GLSDTGYSSDGISSSL) are enriched in polar residues. Positions 1398-1407 (SQESSPSSPS) are enriched in low complexity. 2 stretches are compositionally biased toward basic and acidic residues: residues 1428 to 1451 (ADEK…DQEK) and 1469 to 1510 (KESQ…REPY). Residues Ser-1516, Ser-1517, Ser-1519, Ser-1522, Ser-1546, Ser-1549, Ser-1570, and Ser-1572 each carry the phosphoserine modification. Residues 1564–1576 (SADEDASGSEDDE) show a composition bias toward acidic residues. Phosphothreonine is present on Thr-1617. 3 positions are modified to phosphoserine: Ser-1618, Ser-1628, and Ser-1640. Positions 1631 to 1640 (DEDDEAFDES) are enriched in acidic residues. Positions 1641 to 1652 (PELKYRETKSQE) are enriched in basic and acidic residues. The segment covering 1671–1689 (ELNSTIADKYSAESSQKKT) has biased composition (polar residues). The segment covering 1693 to 1703 (FDEEPELEMES) has biased composition (acidic residues). Ser-1703 carries the post-translational modification Phosphoserine. Phosphothreonine is present on Thr-1705. Phosphoserine is present on residues Ser-1707 and Ser-1712. A compositionally biased stretch (polar residues) spans 1715–1732 (EGSSSLHASSFTPGTSPT). The span at 1772–1785 (DSSEEEELREEEEL) shows a compositional bias: acidic residues. A phosphoserine mark is found at Ser-1773 and Ser-1774. The segment covering 1786-1799 (LKEQEKQREIEQQQ) has biased composition (basic and acidic residues). Thr-1825 carries the post-translational modification Phosphothreonine. Ser-1831 is subject to Phosphoserine. Over residues 1840-1855 (EELRQAAEMEELHRSS) the composition is skewed to basic and acidic residues. A phosphoserine mark is found at Ser-1860, Ser-1865, Ser-1873, and Ser-1894. 3 disordered regions span residues 2169–2192 (PSES…SSVC), 2365–2438 (ETFG…PTIL), and 2504–2536 (EPSK…PTGL). Composition is skewed to low complexity over residues 2174–2192 (TSVP…SSVC) and 2374–2387 (SQLP…SSLP). Pro residues-rich tracts occupy residues 2404–2433 (QPPP…PTSP) and 2506–2517 (SKPPIAPKPVIP). Ser-2562 bears the Phosphoserine mark. At Thr-3069 the chain carries Phosphothreonine. 2 disordered regions span residues 3407-3508 (EKQP…DKTK) and 3558-3626 (KTYK…LYSP). Over residues 3432–3441 (DDPRSFKKIV) the composition is skewed to basic and acidic residues. A Phosphoserine modification is found at Ser-3443. 2 positions are modified to phosphothreonine: Thr-3447 and Thr-3474. The span at 3474–3483 (TDDEDQDEWD) shows a compositional bias: acidic residues. Positions 3574 to 3585 (DTQSPQYLSATS) are enriched in polar residues. A phosphoserine mark is found at Ser-3577, Ser-3585, Ser-3615, Ser-3619, Ser-3625, Ser-3628, Ser-3631, Ser-3652, Ser-3678, Ser-3680, and Ser-3686. Disordered regions lie at residues 3652 to 3746 (SPQK…MGTV) and 3833 to 3908 (YMSD…QQSH). Composition is skewed to polar residues over residues 3701 to 3716 (EGYT…SSGA) and 3733 to 3745 (STGT…TMGT). Ser-3835 is subject to Phosphoserine. Residues 3845 to 3857 (TRIESQHGIERPR) are compositionally biased toward basic and acidic residues. Over residues 3859 to 3908 (APQTEFSQFIPPQTQTESQLVPPTSPYTQYQYSSPALPTQAPTSYTQQSH) the composition is skewed to polar residues. Residues Ser-4088 and Ser-4204 each carry the phosphoserine modification. The disordered stretch occupies residues 4278–4301 (EADKPYSSGSRSRPSSRPSSVYGL). Positions 4282–4301 (PYSSGSRSRPSSRPSSVYGL) are enriched in low complexity. Phosphoserine is present on residues Ser-4358, Ser-4362, Ser-4365, Ser-4394, and Ser-4430. A disordered region spans residues 4389–4411 (RDQFGSSHSLPEVQQHMREESRT). The PDZ domain occupies 4496–4590 (RIKITRDSKD…EAEICVRLDL (95 aa)). 2 disordered regions span residues 4597–4618 (ENSQ…KSPG) and 4645–4690 (EKGS…TKVV). A compositionally biased stretch (basic and acidic residues) spans 4598-4615 (NSQHLELHEPPKAVDKAK). The span at 4652-4673 (SGPTSAGSSSVPSPGQPGSPSV) shows a compositional bias: low complexity. Ser-4664 is modified (phosphoserine). Positions 4694–4823 (ITGEIQLQIN…SHLDNTPRWY (130 aa)) constitute a C2 1 domain. Residues Asp-4723 and Asp-4729 each coordinate Ca(2+). Residue Ser-4778 is modified to Phosphoserine. Residues Asp-4793, Asp-4795, Ser-4798, and Asp-4801 each coordinate Ca(2+). Disordered regions lie at residues 4830-4907 (ESID…VTQT) and 4930-4986 (PTKP…QNGQ). Low complexity-rich tracts occupy residues 4838 to 4853 (HSSQ…SVIK) and 4877 to 4887 (SSPGSSKSSSE). Residues 4895 to 4907 (PSRSQSKTSVTQT) are compositionally biased toward polar residues. Residues 4941–4965 (SSVSTGSSGSSFGSGYSVDSEGSSS) are compositionally biased toward low complexity. The C2 2 domain maps to 5007 to 5132 (VMGEIKIALK…DLRKRIVNWH (126 aa)).

In terms of assembly, interacts with BSN, ERC2/CAST1, RIMS1 and UNC13A. Interacts (via C-terminus) with TRIO (via N-terminus). Interacts with CTBP1. Interacts with SIAH1; this interaction negatively regulates SIAH1 E3 ligase activity. Directly interacts with GIT1 and GIT2. Ca(2+) is required as a cofactor. In terms of tissue distribution, moderately expressed in the developing cerebral cortex.

It is found in the presynaptic active zone. In terms of biological role, scaffold protein of the presynaptic cytomatrix at the active zone (CAZ) which is the place in the synapse where neurotransmitter is released. After synthesis, participates in the formation of Golgi-derived membranous organelles termed Piccolo-Bassoon transport vesicles (PTVs) that are transported along axons to sites of nascent synaptic contacts. At the presynaptic active zone, regulates the spatial organization of synaptic vesicle cluster, the protein complexes that execute membrane fusion and compensatory endocytosis. Organizes as well the readily releasable pool of synaptic vesicles and safeguards a fraction of them to be not immediately available for action potential-induced release. Also functions in processes other than assembly such as the regulation of specific presynaptic protein ubiquitination by interacting with SIAH1 or the regulation of presynaptic autophagy. Also mediates synapse to nucleus communication leading to reconfiguration of gene expression by associating with the transcriptional corepressor CTBP1 and by subsequently reducing the size of its pool available for nuclear import. The polypeptide is Protein piccolo (Homo sapiens (Human)).